The chain runs to 292 residues: Shikimate dehydrogenase (NADP(+)) (292 aa).

Shikimate is bound by residues 25 to 27 and Thr72; that span reads SKS. The active-site Proton acceptor is Lys76. Shikimate contacts are provided by Asn97 and Asp113. Residues 137–141, 161–166, and Met230 each bind NADP(+); these read GAGGA and NRTQSK. Tyr232 provides a ligand contact to shikimate. Gly254 contributes to the NADP(+) binding site.

The protein belongs to the shikimate dehydrogenase family. As to quaternary structure, homodimer.

It carries out the reaction shikimate + NADP(+) = 3-dehydroshikimate + NADPH + H(+). It functions in the pathway metabolic intermediate biosynthesis; chorismate biosynthesis; chorismate from D-erythrose 4-phosphate and phosphoenolpyruvate: step 4/7. In terms of biological role, involved in the biosynthesis of the chorismate, which leads to the biosynthesis of aromatic amino acids. Catalyzes the reversible NADPH linked reduction of 3-dehydroshikimate (DHSA) to yield shikimate (SA). The protein is Shikimate dehydrogenase (NADP(+)) of Shewanella sp. (strain ANA-3).